A 348-amino-acid chain; its full sequence is Histidinol-phosphate aminotransferase (348 aa).

N6-(pyridoxal phosphate)lysine is present on K210.

The protein belongs to the class-II pyridoxal-phosphate-dependent aminotransferase family. Histidinol-phosphate aminotransferase subfamily. Homodimer. Pyridoxal 5'-phosphate is required as a cofactor.

The enzyme catalyses L-histidinol phosphate + 2-oxoglutarate = 3-(imidazol-4-yl)-2-oxopropyl phosphate + L-glutamate. The protein operates within amino-acid biosynthesis; L-histidine biosynthesis; L-histidine from 5-phospho-alpha-D-ribose 1-diphosphate: step 7/9. The chain is Histidinol-phosphate aminotransferase from Pseudomonas putida (strain W619).